We begin with the raw amino-acid sequence, 158 residues long: Inner membrane assembly complex subunit 17 (158 aa).

A mitochondrion-targeting transit peptide spans 1-15; it reads MFRPLVKRVVTRRFL. At 16 to 85 the chain is on the mitochondrial matrix side; it reads AAANNSNAHI…KTQETSLKKF (70 aa). Residues 86–108 form a helical membrane-spanning segment; sequence VRPAWIFLLMGSIVYLSCHYVWW. At 109-158 the chain is on the mitochondrial intermembrane side; it reads KLDYEEKELEYTHKVHQLESELAALNEAHNSSVSSDKNSKRSSRKWYKFW. A coiled-coil region spans residues 110–140; that stretch reads LDYEEKELEYTHKVHQLESELAALNEAHNSS.

Belongs to the INA17 family. Component of the inner membrane assembly (INA) complex, composed of INA17 and INA22. Interacts with a subset of F(1)F(0)-ATP synthase subunits of the F(1)-domain and the peripheral stalk.

The protein resides in the mitochondrion inner membrane. Its function is as follows. Component of the INA complex (INAC) that promotes the biogenesis of mitochondrial F(1)F(0)-ATP synthase. INAC facilitates the assembly of the peripheral stalk and promotes the assembly of the catalytic F(1)-domain with the membrane-embedded F(0)-domain. This Kluyveromyces lactis (strain ATCC 8585 / CBS 2359 / DSM 70799 / NBRC 1267 / NRRL Y-1140 / WM37) (Yeast) protein is Inner membrane assembly complex subunit 17.